Here is a 126-residue protein sequence, read N- to C-terminus: MDKSLLLELPILLCCFRALSGSLSMRNDAVNEIVAVKNNFPVIEIVQCRMCHLQFPGEKCSRGRGICTATTEEACMVGRMFKRDGNPWLTFMGCLKNCADVKGIRWSVYLVNFRCCRSHDLCNEDL.

Residues 1 to 21 (MDKSLLLELPILLCCFRALSG) form the signal peptide. The UPAR/Ly6 domain maps to 46–125 (VQCRMCHLQF…CRSHDLCNED (80 aa)). Intrachain disulfides connect Cys48-Cys75, Cys51-Cys60, Cys67-Cys94, and Cys98-Cys115.

Belongs to the PATE family. As to expression, expressed specifically in prostate cancer, normal prostate, and testis. Expressed in the epithelial cells of the prostate cancer and normal prostate tissues.

The protein resides in the secreted. This is Prostate and testis expressed protein 1 (PATE1) from Homo sapiens (Human).